The chain runs to 91 residues: Probable Fe(2+)-trafficking protein (91 aa).

This sequence belongs to the Fe(2+)-trafficking protein family. In terms of assembly, monomer.

In terms of biological role, could be a mediator in iron transactions between iron acquisition and iron-requiring processes, such as synthesis and/or repair of Fe-S clusters in biosynthetic enzymes. The sequence is that of Probable Fe(2+)-trafficking protein from Escherichia coli O6:H1 (strain CFT073 / ATCC 700928 / UPEC).